A 134-amino-acid polypeptide reads, in one-letter code: Large ribosomal subunit protein uL22 (134 aa).

This sequence belongs to the universal ribosomal protein uL22 family. As to quaternary structure, part of the 50S ribosomal subunit.

This protein binds specifically to 23S rRNA; its binding is stimulated by other ribosomal proteins, e.g. L4, L17, and L20. It is important during the early stages of 50S assembly. It makes multiple contacts with different domains of the 23S rRNA in the assembled 50S subunit and ribosome. In terms of biological role, the globular domain of the protein is located near the polypeptide exit tunnel on the outside of the subunit, while an extended beta-hairpin is found that lines the wall of the exit tunnel in the center of the 70S ribosome. This is Large ribosomal subunit protein uL22 from Rhodococcus erythropolis (strain PR4 / NBRC 100887).